A 231-amino-acid chain; its full sequence is WAP four-disulfide core domain protein 3 (231 aa).

Residues 1–24 (MMLSCLFLLKALLALGSLESWITA) form the signal peptide. WAP domains are found at residues 26 to 68 (EHAK…CRDI), 69 to 114 (PKGR…VVPI), 119 to 162 (LAEF…LGDI), and 163 to 207 (EGGR…VPPV). Cystine bridges form between C33/C57, C40/C61, C44/C56, C50/C65, C76/C102, C85/C106, C89/C101, C95/C110, C126/C150, C133/C154, C137/C149, C143/C158, C170/C195, C178/C199, C182/C194, and C188/C203. An N-linked (GlcNAc...) asparagine glycan is attached at N107. Residue N217 is glycosylated (N-linked (GlcNAc...) asparagine).

Ubiquitously expressed.

The protein resides in the secreted. The chain is WAP four-disulfide core domain protein 3 (WFDC3) from Homo sapiens (Human).